Here is a 485-residue protein sequence, read N- to C-terminus: MADLINILNHFVQEQPEAVAVRHTNDELTYKQLDEESSKLAHLLQDSKKPMILYGHMSPYMIVGMIGAIKSGCGYVPIDTSVPKERVNMIIDKVQPEIIFNTSDETLEQTNAQVLKVSDIQDSQYPIVFDSQMKQNDVVYTIFTSGSTGEPKGVQIEYASLNEFAEWMVSLNKTGTGKEWLNQAPFSFDLSVMAIYPCLTSGGTLNLVDKDMIKKPKLLNEMLVQTPMNVWVSTPSFIEMCLLLPNLNEQQYNSLKQFFFCGEILSHKTAKVLVERFPNSMIYNTYGPTEATVAVTSIQITEEILNQYNPLPVGVARPGTRLFATEEGELVIEGQSVSLGYLKNEEKTAAVFNFEDGVRTYHTGDKAKIEDGLWFIQGRIDFQIKLNGYRMELEEIETQLRQSKHVREAVVVPVYKNGKVVHLIGAVVPTESVEDNLAMTTQIKHELKSRLPEYMIPRKFEWMERLPLTLNGKLDRKKIAEVVNG.

An ATP-binding site is contributed by 144 to 145 (TS). Residue Asp189 coordinates D-alanine. Position 284 to 289 (284 to 289 (NTYGPT)) interacts with ATP. Residue Val293 coordinates D-alanine. ATP-binding residues include Asp365 and Lys473. Lys473 is a binding site for D-alanine.

Belongs to the ATP-dependent AMP-binding enzyme family. DltA subfamily.

The protein localises to the cytoplasm. It catalyses the reaction holo-[D-alanyl-carrier protein] + D-alanine + ATP = D-alanyl-[D-alanyl-carrier protein] + AMP + diphosphate. Its pathway is cell wall biogenesis; lipoteichoic acid biosynthesis. Its function is as follows. Catalyzes the first step in the D-alanylation of lipoteichoic acid (LTA), the activation of D-alanine and its transfer onto the D-alanyl carrier protein (Dcp) DltC. In an ATP-dependent two-step reaction, forms a high energy D-alanyl-AMP intermediate, followed by transfer of the D-alanyl residue as a thiol ester to the phosphopantheinyl prosthetic group of the Dcp. D-alanylation of LTA plays an important role in modulating the properties of the cell wall in Gram-positive bacteria, influencing the net charge of the cell wall. The chain is D-alanine--D-alanyl carrier protein ligase from Staphylococcus epidermidis (strain ATCC 35984 / DSM 28319 / BCRC 17069 / CCUG 31568 / BM 3577 / RP62A).